Reading from the N-terminus, the 330-residue chain is Protein TIFY 11f (330 aa).

A Tify 1 domain is found at 61–97; it reads EAAAAAQLKIMYGGRMLVFDDFFPAGGAVVELVRAAA. Positions 124–142 match the Jas motif; that stretch reads PVVRKVSLQRFVEKRRRMR. The Nuclear localization signal motif lies at 126–133; sequence VRKVSLQR. Residues 228 to 264 form the Tify 2 domain; that stretch reads EAAAAAQLKIMYGGRMLVFDDFFPAGGAVVELVRAAA. The interval 267-330 is disordered; sequence GRDDDGARAR…SGRTDDAAFY (64 aa).

It belongs to the TIFY/JAZ family. Post-translationally, ubiquitinated. Targeted for degradation by the SCF(COI1) E3 ubiquitin ligase-proteasome pathway during jasmonate signaling.

It is found in the nucleus. Its function is as follows. Repressor of jasmonate responses. The sequence is that of Protein TIFY 11f from Oryza sativa subsp. japonica (Rice).